A 540-amino-acid polypeptide reads, in one-letter code: tRNA-2-methylthio-N(6)-dimethylallyladenosine synthase (540 aa).

In terms of domain architecture, MTTase N-terminal spans 4 to 120 (RSYEVRTFGC…LPVLLERARH (117 aa)). The [4Fe-4S] cluster site is built by Cys13, Cys49, Cys83, Cys157, Cys161, and Cys164. Positions 143–374 (RASHHSAWVS…ALQDEISWAE (232 aa)) constitute a Radical SAM core domain. In terms of domain architecture, TRAM spans 376-468 (RALVGRRVEV…PHHLTADGPL (93 aa)). Residues 480-540 (WALGRDGDGG…ADACCTPVRR (61 aa)) form a disordered region. 2 stretches are compositionally biased toward low complexity: residues 492–502 (AAAQQPADGRP) and 520–533 (GPAS…GADA).

This sequence belongs to the methylthiotransferase family. MiaB subfamily. In terms of assembly, monomer. [4Fe-4S] cluster is required as a cofactor.

It is found in the cytoplasm. It catalyses the reaction N(6)-dimethylallyladenosine(37) in tRNA + (sulfur carrier)-SH + AH2 + 2 S-adenosyl-L-methionine = 2-methylsulfanyl-N(6)-dimethylallyladenosine(37) in tRNA + (sulfur carrier)-H + 5'-deoxyadenosine + L-methionine + A + S-adenosyl-L-homocysteine + 2 H(+). In terms of biological role, catalyzes the methylthiolation of N6-(dimethylallyl)adenosine (i(6)A), leading to the formation of 2-methylthio-N6-(dimethylallyl)adenosine (ms(2)i(6)A) at position 37 in tRNAs that read codons beginning with uridine. The chain is tRNA-2-methylthio-N(6)-dimethylallyladenosine synthase from Frankia casuarinae (strain DSM 45818 / CECT 9043 / HFP020203 / CcI3).